The primary structure comprises 297 residues: Protease HtpX homolog (297 aa).

Transmembrane regions (helical) follow at residues 14-34 and 39-59; these read IFLI…AGYL and YQFG…SMIF. H143 contributes to the Zn(2+) binding site. Residue E144 is part of the active site. H147 is a binding site for Zn(2+). The next 2 membrane-spanning stretches (helical) occupy residues 153-173 and 196-216; these read IRIS…ASMG and IVFL…ASMV. E225 lines the Zn(2+) pocket.

Belongs to the peptidase M48B family. The cofactor is Zn(2+).

It is found in the cell membrane. This is Protease HtpX homolog from Streptococcus uberis (strain ATCC BAA-854 / 0140J).